Here is a 154-residue protein sequence, read N- to C-terminus: Small ribosomal subunit protein bS6 (154 aa).

The tract at residues 107–154 is disordered; that stretch reads KSDDRERGFRGPKPPGRFESGRKRGYDDREEFRARAGGDDDDRGLDQE. Residues 125–154 are compositionally biased toward basic and acidic residues; that stretch reads ESGRKRGYDDREEFRARAGGDDDDRGLDQE.

The protein belongs to the bacterial ribosomal protein bS6 family.

Binds together with bS18 to 16S ribosomal RNA. The chain is Small ribosomal subunit protein bS6 from Granulibacter bethesdensis (strain ATCC BAA-1260 / CGDNIH1).